The chain runs to 556 residues: Formate--tetrahydrofolate ligase (556 aa).

65 to 72 contributes to the ATP binding site; the sequence is TSAGEGKT.

This sequence belongs to the formate--tetrahydrofolate ligase family.

The enzyme catalyses (6S)-5,6,7,8-tetrahydrofolate + formate + ATP = (6R)-10-formyltetrahydrofolate + ADP + phosphate. It functions in the pathway one-carbon metabolism; tetrahydrofolate interconversion. This chain is Formate--tetrahydrofolate ligase, found in Kosmotoga olearia (strain ATCC BAA-1733 / DSM 21960 / TBF 19.5.1).